A 148-amino-acid chain; its full sequence is L-alanine exporter AlaE (148 aa).

4 consecutive transmembrane segments (helical) span residues 18-38 (FALV…ISGM), 49-69 (VSIP…DAFI), 88-108 (LLAY…SVGA), and 115-135 (TAVA…GYFL).

This sequence belongs to the AlaE exporter family.

It is found in the cell inner membrane. Its function is as follows. Exports L-alanine. In Yersinia enterocolitica subsp. palearctica serotype O:3 (strain DSM 13030 / CIP 106945 / Y11), this protein is L-alanine exporter AlaE.